The chain runs to 442 residues: D-inositol 3-phosphate glycosyltransferase (442 aa).

His-26 contacts 1D-myo-inositol 3-phosphate. UDP-N-acetyl-alpha-D-glucosamine is bound by residues 32–33 and Gly-40; that span reads QP. Residues 37-42, Lys-95, Tyr-128, Thr-152, and Arg-172 each bind 1D-myo-inositol 3-phosphate; that span reads DAGGMN. UDP-N-acetyl-alpha-D-glucosamine is bound by residues Arg-246, Lys-251, and Gln-304. Mg(2+) contacts are provided by Tyr-313, Arg-314, and Ala-316. UDP-N-acetyl-alpha-D-glucosamine contacts are provided by Glu-326 and Glu-334. Thr-340 contacts Mg(2+).

The protein belongs to the glycosyltransferase group 1 family. MshA subfamily. As to quaternary structure, homodimer.

The catalysed reaction is 1D-myo-inositol 3-phosphate + UDP-N-acetyl-alpha-D-glucosamine = 1D-myo-inositol 2-acetamido-2-deoxy-alpha-D-glucopyranoside 3-phosphate + UDP + H(+). In terms of biological role, catalyzes the transfer of a N-acetyl-glucosamine moiety to 1D-myo-inositol 3-phosphate to produce 1D-myo-inositol 2-acetamido-2-deoxy-glucopyranoside 3-phosphate in the mycothiol biosynthesis pathway. The chain is D-inositol 3-phosphate glycosyltransferase from Mycolicibacterium gilvum (strain PYR-GCK) (Mycobacterium gilvum (strain PYR-GCK)).